The primary structure comprises 926 residues: DNA mismatch repair protein MutS (926 aa).

The disordered stretch occupies residues Met1–Gln67. 2 stretches are compositionally biased toward polar residues: residues Gln18–Ser44 and Lys57–Gln67. Gly726–Ser733 lines the ATP pocket.

Belongs to the DNA mismatch repair MutS family.

Its function is as follows. This protein is involved in the repair of mismatches in DNA. It is possible that it carries out the mismatch recognition step. This protein has a weak ATPase activity. In Prochlorococcus marinus (strain NATL1A), this protein is DNA mismatch repair protein MutS.